A 506-amino-acid polypeptide reads, in one-letter code: Tabersonine 6,7-epoxidase isoform 1 (506 aa).

Residues 1-21 (MEFVVSLFAFVVSCFILLKVA) form a helical membrane-spanning segment. N-linked (GlcNAc...) asparagine glycosylation is found at Asn-173 and Asn-261. Residue Cys-441 participates in heme binding.

It belongs to the cytochrome P450 family. Heme is required as a cofactor. Mainly expressed in roots.

It localises to the endoplasmic reticulum membrane. It catalyses the reaction (-)-tabersonine + reduced [NADPH--hemoprotein reductase] + O2 = lochnericine + oxidized [NADPH--hemoprotein reductase] + H2O + H(+). It participates in alkaloid biosynthesis. Its function is as follows. Component of the monoterpenoid indole alkaloids (MIAs, e.g. echitovenine, tabersonine, lochnericine, 19-hydroxytabersonine and horhammericine) biosynthetic pathway; MIAs are used in cancer treatment and other medical applications. Cytochrome P450 catalyzing the conversion of tabersonine to lochnericine. The sequence is that of Tabersonine 6,7-epoxidase isoform 1 from Catharanthus roseus (Madagascar periwinkle).